The primary structure comprises 307 residues: Pantothenate kinase (307 aa).

90–97 (GSVAVGKS) serves as a coordination point for ATP.

This sequence belongs to the prokaryotic pantothenate kinase family.

It is found in the cytoplasm. It carries out the reaction (R)-pantothenate + ATP = (R)-4'-phosphopantothenate + ADP + H(+). It participates in cofactor biosynthesis; coenzyme A biosynthesis; CoA from (R)-pantothenate: step 1/5. This is Pantothenate kinase from Enterococcus faecalis (strain ATCC 700802 / V583).